The primary structure comprises 273 residues: Type II pantothenate kinase (273 aa).

Aspartate 8–lysine 15 serves as a coordination point for ATP. The Proton acceptor role is filled by glutamate 76. ATP-binding positions include threonine 105, glycine 127–methionine 131, phenylalanine 143, and serine 230.

The protein belongs to the type II pantothenate kinase family. Homodimer.

The protein resides in the cytoplasm. It catalyses the reaction (R)-pantothenate + ATP = (R)-4'-phosphopantothenate + ADP + H(+). It functions in the pathway cofactor biosynthesis; coenzyme A biosynthesis; CoA from (R)-pantothenate: step 1/5. In terms of biological role, catalyzes the phosphorylation of pantothenate (Pan), the first step in CoA biosynthesis. The sequence is that of Type II pantothenate kinase from Bacillus cereus (strain G9842).